A 637-amino-acid polypeptide reads, in one-letter code: Early transcription factor 70 kDa subunit (637 aa).

A Helicase ATP-binding domain is found at 32–185 (RTIIDENRSV…GHIIDLMSEE (154 aa)). 45–52 (HIMGSGKT) serves as a coordination point for ATP. The DEXH box signature appears at 135 to 138 (DEAH). The region spanning 327-507 (KFKYFINRIQ…VLPFDIKKLL (181 aa)) is the Helicase C-terminal domain.

It belongs to the helicase family. VETF subfamily. Heterodimer of a 70 kDa and a 82 kDa subunit. Part of the early transcription complex composed of ETF, RAP94/OPG109, and the DNA-directed RNA polymerase.

The protein localises to the virion. Functionally, acts with RNA polymerase to initiate transcription from early gene promoters. Is recruited by the RPO-associated protein of 94 kDa RAP94/OPG109 to form the early transcription complex, which also contains the core RNA polymerase. ETF heterodimer binds to early gene promoters. This Homo sapiens (Human) protein is Early transcription factor 70 kDa subunit (OPG118).